The following is a 523-amino-acid chain: 2-isopropylmalate synthase (523 aa).

One can recognise a Pyruvate carboxyltransferase domain in the interval 5 to 267 (VIIFDTTLRD…ETGINAKEIH (263 aa)). Mn(2+) contacts are provided by aspartate 14, histidine 202, histidine 204, and asparagine 238. Residues 392 to 523 (KLQQLVVHSD…QQNKRELGGV (132 aa)) form a regulatory domain region.

This sequence belongs to the alpha-IPM synthase/homocitrate synthase family. LeuA type 1 subfamily. In terms of assembly, homodimer. Requires Mn(2+) as cofactor.

The protein resides in the cytoplasm. The catalysed reaction is 3-methyl-2-oxobutanoate + acetyl-CoA + H2O = (2S)-2-isopropylmalate + CoA + H(+). Its pathway is amino-acid biosynthesis; L-leucine biosynthesis; L-leucine from 3-methyl-2-oxobutanoate: step 1/4. Its function is as follows. Catalyzes the condensation of the acetyl group of acetyl-CoA with 3-methyl-2-oxobutanoate (2-ketoisovalerate) to form 3-carboxy-3-hydroxy-4-methylpentanoate (2-isopropylmalate). This is 2-isopropylmalate synthase from Shewanella pealeana (strain ATCC 700345 / ANG-SQ1).